Reading from the N-terminus, the 161-residue chain is Regulator of ribonuclease activity A (161 aa).

It belongs to the RraA family. As to quaternary structure, homotrimer. Binds to both RNA-binding sites in the C-terminal region of Rne and to RhlB.

It is found in the cytoplasm. Its function is as follows. Globally modulates RNA abundance by binding to RNase E (Rne) and regulating its endonucleolytic activity. Can modulate Rne action in a substrate-dependent manner by altering the composition of the degradosome. Modulates RNA-binding and helicase activities of the degradosome. The chain is Regulator of ribonuclease activity A from Alteromonas mediterranea (strain DSM 17117 / CIP 110805 / LMG 28347 / Deep ecotype).